The sequence spans 1278 residues: ABC transporter B family member 11 (1278 aa).

2 stretches are compositionally biased toward basic and acidic residues: residues 1 to 13 and 21 to 35; these read MNGD…DSVS and SPKE…EKSE. Residues 1 to 35 are disordered; that stretch reads MNGDGAREGDSVSHEPSTSKSPKEGEETKKEEKSE. 6 helical membrane-spanning segments follow: residues 55-75, 106-126, 182-202, 205-225, 285-305, and 314-334; these read VLLM…LPFM, FVYL…CWMI, FIQL…KGWL, LVML…ALIV, GLGL…AIWF, and GYTG…SMSL. The 289-residue stretch at 58–346 folds into the ABC transmembrane type-1 1 domain; sequence MICGSIGAIG…TSPCVTAFAA (289 aa). In terms of domain architecture, ABC transporter 1 spans 381-617; it reads IELKDVHFSY…SEGAYSQLIR (237 aa). 416–423 serves as a coordination point for ATP; it reads GESGSGKS. Residues Asn483, Asn568, and Asn653 are each glycosylated (N-linked (GlcNAc...) asparagine). A compositionally biased stretch (polar residues) spans 629–654; sequence ELSSGSSFRNSNLKKSMEGTSSVGNS. Residues 629-656 are disordered; that stretch reads ELSSGSSFRNSNLKKSMEGTSSVGNSSR. Positions 710–997 constitute an ABC transmembrane type-1 2 domain; sequence LLLGTVAAAI…SSTFAPDSSK (288 aa). The next 2 helical transmembrane spans lie at 711-731 and 751-771; these read LLGT…GILI and FWAI…PTQM. The N-linked (GlcNAc...) asparagine glycan is linked to Asn806. 4 helical membrane-spanning segments follow: residues 824 to 844, 845 to 865, 932 to 952, and 971 to 991; these read ALVG…ASGL, IIAF…LPLI, GFIS…VYAT, and VFQV…SSTF. The ABC transporter 2 domain maps to 1032 to 1271; sequence IELRHLSFTY…EGGVYASLVQ (240 aa). ATP is bound at residue 1067 to 1074; it reads GESGSGKS. 2 N-linked (GlcNAc...) asparagine glycosylation sites follow: Asn1121 and Asn1222.

This sequence belongs to the ABC transporter superfamily. ABCB family. Multidrug resistance exporter (TC 3.A.1.201) subfamily. As to expression, present in roots and flower buds.

Its subcellular location is the membrane. The enzyme catalyses (indol-3-yl)acetate(in) + ATP + H2O = (indol-3-yl)acetate(out) + ADP + phosphate + H(+). Involved in the regulation of auxin transport required for pistil elongation. This is ABC transporter B family member 11 from Arabidopsis thaliana (Mouse-ear cress).